The sequence spans 367 residues: Pantothenate kinase CAB1 (367 aa).

Belongs to the type II pantothenate kinase family.

It localises to the cytoplasm. Its subcellular location is the nucleus. The enzyme catalyses (R)-pantothenate + ATP = (R)-4'-phosphopantothenate + ADP + H(+). It functions in the pathway cofactor biosynthesis; coenzyme A biosynthesis; CoA from (R)-pantothenate: step 1/5. Regulated by feedback inhibition by malonyl-CoA. In terms of biological role, plays a role in the physiological regulation of the intracellular CoA concentration. The sequence is that of Pantothenate kinase CAB1 (CAB1) from Saccharomyces cerevisiae (strain ATCC 204508 / S288c) (Baker's yeast).